The sequence spans 93 residues: MKFFAVAALFVASAMAGPMGSEGCPGGLTGTVPLCCATNVLNIADLDCSTPTIPVPNVGIFQAHCASKGKQPVCCTLPVAGQGLLCNKPTGAQ.

An N-terminal signal peptide occupies residues 1-16 (MKFFAVAALFVASAMA). Cystine bridges form between C24/C74, C35/C65, C36/C48, and C75/C86.

Belongs to the cerato-ulmin hydrophobin family. Interacts with maize ubiquilin 1-like (UBL) protein. Homotetramer. Further self-assembles to form highly ordered films at water-air interfaces through intermolecular interactions.

Its subcellular location is the cell membrane. Its function is as follows. Aerial growth, conidiation, and dispersal of filamentous fungi in the environment rely upon a capability of their secreting small amphipathic proteins called hydrophobins (HPBs) with low sequence identity. Class I can self-assemble into an outermost layer of rodlet bundles on aerial cell surfaces, conferring cellular hydrophobicity that supports fungal growth, development and dispersal; whereas Class II form highly ordered films at water-air interfaces through intermolecular interactions but contribute nothing to the rodlet structure. Hyd1 is a class II hydrophobin that acts as an elicitor of induced systemic resistance (ISR) in plants. During interaction with the plant, binds with the maize target protein UBL in order to recruit more UBL proteins in maize roots to elicit plant defense responses, including cell death as well as brassinosteroid, jasmonate (JA) and ethylene (ET) signaling. This Trichoderma harzianum (Hypocrea lixii) protein is Class II hydrophobin 1.